The following is a 468-amino-acid chain: MTLKSGRGGGGGSGSMRTALSDLYLEHLLQNRAKPEAIAQAPNAMTEDIYTNGSATLGSPSHSNGREVRKIRLVQFEKVTEEPMGITLKLNDKQSCMVARIFHGGMIHRQGSLHVGDEIIEINGQSVSNHSVDQLQKMLKETQGMVSIKVIPNQQSRLPALQMFMRAQFDYDPKKDNLIPCKEAGLKFQTGDVIQIINKDDSNWWQGRVEGSGTESAGLIPSPELQEWRVASVTQSSQSEAQSCSPFGKKKKYKDKYLAKHSSIFDQLDVVSYEEVVRLPAFKRKTLVLIGASGVGRSHIKNALLSNNPEKFMYPPPYTTRPQKKNEVDGKDYYFVSTEEMTRDISANEFLEFGSYQGNMFGTKFETVHKIHQQDKVAILDIEPQTLKIVRTAELSPFIVFIAPTDKAEESEALQQLRKDSESIRSRYAHYFDLSIVNNGVEESLKLLEEAFEQACSSPQWVPVSWVY.

The 82-residue stretch at 73–154 (LVQFEKVTEE…MVSIKVIPNQ (82 aa)) folds into the PDZ domain. In terms of domain architecture, SH3 spans 160–230 (ALQMFMRAQF…PSPELQEWRV (71 aa)). The region spanning 284–453 (RKTLVLIGAS…SLKLLEEAFE (170 aa)) is the Guanylate kinase-like domain.

This sequence belongs to the MAGUK family.

The protein resides in the membrane. The protein localises to the cell projection. It localises to the stereocilium. Its function is as follows. May play a role in the regulation of neutrophil polarization. The polypeptide is 55 kDa erythrocyte membrane protein (MPP1) (Gallus gallus (Chicken)).